The primary structure comprises 89 residues: Small ribosomal subunit protein uS15 (89 aa).

Belongs to the universal ribosomal protein uS15 family. In terms of assembly, part of the 30S ribosomal subunit. Forms a bridge to the 50S subunit in the 70S ribosome, contacting the 23S rRNA.

Functionally, one of the primary rRNA binding proteins, it binds directly to 16S rRNA where it helps nucleate assembly of the platform of the 30S subunit by binding and bridging several RNA helices of the 16S rRNA. Its function is as follows. Forms an intersubunit bridge (bridge B4) with the 23S rRNA of the 50S subunit in the ribosome. The chain is Small ribosomal subunit protein uS15 from Latilactobacillus sakei subsp. sakei (strain 23K) (Lactobacillus sakei subsp. sakei).